We begin with the raw amino-acid sequence, 451 residues long: UDP-N-acetylmuramoylalanine--D-glutamate ligase (451 aa).

119 to 125 (GSNGKTT) contributes to the ATP binding site.

It belongs to the MurCDEF family.

It is found in the cytoplasm. The catalysed reaction is UDP-N-acetyl-alpha-D-muramoyl-L-alanine + D-glutamate + ATP = UDP-N-acetyl-alpha-D-muramoyl-L-alanyl-D-glutamate + ADP + phosphate + H(+). Its pathway is cell wall biogenesis; peptidoglycan biosynthesis. Its function is as follows. Cell wall formation. Catalyzes the addition of glutamate to the nucleotide precursor UDP-N-acetylmuramoyl-L-alanine (UMA). This Bacillus cytotoxicus (strain DSM 22905 / CIP 110041 / 391-98 / NVH 391-98) protein is UDP-N-acetylmuramoylalanine--D-glutamate ligase.